An 819-amino-acid polypeptide reads, in one-letter code: Aminopeptidase O (819 aa).

His-479 is a binding site for Zn(2+). The Proton acceptor role is filled by Glu-480. Residues His-483 and Glu-502 each coordinate Zn(2+). The short motif at Arg-689–Lys-699 is the Nucleolar localization signal element.

This sequence belongs to the peptidase M1 family. Zn(2+) serves as cofactor.

The protein localises to the nucleus. It is found in the nucleolus. It localises to the cytoplasm. Aminopeptidase which catalyzes the hydrolysis of amino acid residues from the N-terminus of peptide or protein substrates. This Homo sapiens (Human) protein is Aminopeptidase O.